A 295-amino-acid chain; its full sequence is MDEREALIKAGEIARQVKKEVISLIKPGTKLYDIAEFVERRIIELGGKPAFPCNLSINEIAAHYTPYKGDETVLKEGDYLKVDIGVHVDGYIADTALTFRVGMEEDDLVTAAREALENAIKVIRAGIKINEIGKAIEETIRGYGFNPIVNLSGHKIERYKLHAGISIPNIYRPADSYVLKEGDVIAIEPFATTGAGQVIEVPPALIFMYLRDRPVRMAQARRVLMHIKREYNGLPFAYRWLQGFMPEGQLKLALAQLDRVGAIYSYPILREVRGGLVAQFEHTVIVEKEGAYITT.

H63 is a binding site for substrate. D83, D94, and H154 together coordinate a divalent metal cation. H162 is a binding site for substrate. Residues E188 and E281 each coordinate a divalent metal cation.

The protein belongs to the peptidase M24A family. Methionine aminopeptidase archaeal type 2 subfamily. As to quaternary structure, monomer. Fe(2+) is required as a cofactor. The cofactor is Co(2+). It depends on Ni(2+) as a cofactor. Mn(2+) serves as cofactor.

The enzyme catalyses Release of N-terminal amino acids, preferentially methionine, from peptides and arylamides.. Removes the N-terminal methionine from nascent proteins. The N-terminal methionine is often cleaved when the second residue in the primary sequence is small and uncharged (Met-Ala-, Cys, Gly, Pro, Ser, Thr, or Val). The chain is Methionine aminopeptidase from Thermococcus onnurineus (strain NA1).